The primary structure comprises 313 residues: Protein YABBY 3 (313 aa).

The segment at 65 to 92 (CHYCDTVLVVSVPSSSLFETVTVRCGHC) adopts a C4-type zinc-finger fold. 2 disordered regions span residues 107-149 (TTAA…SLLD) and 180-221 (NNSP…KRQR). Residues 112-128 (APPPPPPPPPPPPPPAA) are compositionally biased toward pro residues.

Belongs to the YABBY family. In terms of tissue distribution, expressed in shoot apex and young inflorescences.

The protein localises to the nucleus. This Oryza sativa subsp. japonica (Rice) protein is Protein YABBY 3 (YAB3).